We begin with the raw amino-acid sequence, 131 residues long: Phosphoribosyl-AMP cyclohydrolase (131 aa).

Asp-76 provides a ligand contact to Mg(2+). Residue Cys-77 coordinates Zn(2+). 2 residues coordinate Mg(2+): Asp-78 and Asp-80. Zn(2+) contacts are provided by Cys-94 and Cys-101.

The protein belongs to the PRA-CH family. As to quaternary structure, homodimer. Requires Mg(2+) as cofactor. The cofactor is Zn(2+).

The protein resides in the cytoplasm. The catalysed reaction is 1-(5-phospho-beta-D-ribosyl)-5'-AMP + H2O = 1-(5-phospho-beta-D-ribosyl)-5-[(5-phospho-beta-D-ribosylamino)methylideneamino]imidazole-4-carboxamide. Its pathway is amino-acid biosynthesis; L-histidine biosynthesis; L-histidine from 5-phospho-alpha-D-ribose 1-diphosphate: step 3/9. In terms of biological role, catalyzes the hydrolysis of the adenine ring of phosphoribosyl-AMP. The polypeptide is Phosphoribosyl-AMP cyclohydrolase (Stutzerimonas stutzeri (strain A1501) (Pseudomonas stutzeri)).